Consider the following 257-residue polypeptide: Putative pentatricopeptide repeat-containing protein At1g43010 (257 aa).

PPR repeat units lie at residues 133 to 168 and 169 to 203; these read KMRD…GFLL and KPYL…NMEV.

This sequence belongs to the PPR family. P subfamily.

The chain is Putative pentatricopeptide repeat-containing protein At1g43010 from Arabidopsis thaliana (Mouse-ear cress).